We begin with the raw amino-acid sequence, 184 residues long: RNA 2',3'-cyclic phosphodiesterase (184 aa).

His42 (proton donor) is an active-site residue. 2 consecutive short sequence motifs (HXTX) follow at residues 42–45 and 127–130; these read HFTL and HLTV. The active-site Proton acceptor is the His127.

Belongs to the 2H phosphoesterase superfamily. ThpR family.

The catalysed reaction is a 3'-end 2',3'-cyclophospho-ribonucleotide-RNA + H2O = a 3'-end 2'-phospho-ribonucleotide-RNA + H(+). Functionally, hydrolyzes RNA 2',3'-cyclic phosphodiester to an RNA 2'-phosphomonoester. The sequence is that of RNA 2',3'-cyclic phosphodiesterase from Methanothermobacter thermautotrophicus (strain ATCC 29096 / DSM 1053 / JCM 10044 / NBRC 100330 / Delta H) (Methanobacterium thermoautotrophicum).